Reading from the N-terminus, the 95-residue chain is Small ribosomal subunit protein bS6 (95 aa).

It belongs to the bacterial ribosomal protein bS6 family.

Binds together with bS18 to 16S ribosomal RNA. The polypeptide is Small ribosomal subunit protein bS6 (Corynebacterium jeikeium (strain K411)).